The following is a 968-amino-acid chain: Translation initiation factor IF-2 (968 aa).

Residues 305-319 show a composition bias toward low complexity; it reads KPAAAAGAPGAPGAA. The interval 305–376 is disordered; that stretch reads KPAAAAGAPG…NDRDARPEST (72 aa). In terms of domain architecture, tr-type G spans 468–635; the sequence is PRAPVVTVMG…QVLLQAEVLE (168 aa). The interval 477–484 is G1; the sequence is GHVDHGKT. Position 477–484 (477–484) interacts with GTP; the sequence is GHVDHGKT. The segment at 502 to 506 is G2; it reads GITQH. Positions 523–526 are G3; it reads DTPG. GTP is bound by residues 523-527 and 577-580; these read DTPGH and NKID. The tract at residues 577-580 is G4; it reads NKID. Residues 613–615 form a G5 region; the sequence is SAR.

This sequence belongs to the TRAFAC class translation factor GTPase superfamily. Classic translation factor GTPase family. IF-2 subfamily.

Its subcellular location is the cytoplasm. In terms of biological role, one of the essential components for the initiation of protein synthesis. Protects formylmethionyl-tRNA from spontaneous hydrolysis and promotes its binding to the 30S ribosomal subunits. Also involved in the hydrolysis of GTP during the formation of the 70S ribosomal complex. The polypeptide is Translation initiation factor IF-2 (Polaromonas sp. (strain JS666 / ATCC BAA-500)).